The following is a 249-amino-acid chain: Enolase-phosphatase E1 (249 aa).

This sequence belongs to the HAD-like hydrolase superfamily. MasA/MtnC family. In terms of assembly, monomer. Mg(2+) serves as cofactor.

The enzyme catalyses 5-methylsulfanyl-2,3-dioxopentyl phosphate + H2O = 1,2-dihydroxy-5-(methylsulfanyl)pent-1-en-3-one + phosphate. The protein operates within amino-acid biosynthesis; L-methionine biosynthesis via salvage pathway; L-methionine from S-methyl-5-thio-alpha-D-ribose 1-phosphate: step 3/6. It participates in amino-acid biosynthesis; L-methionine biosynthesis via salvage pathway; L-methionine from S-methyl-5-thio-alpha-D-ribose 1-phosphate: step 4/6. Functionally, bifunctional enzyme that catalyzes the enolization of 2,3-diketo-5-methylthiopentyl-1-phosphate (DK-MTP-1-P) into the intermediate 2-hydroxy-3-keto-5-methylthiopentenyl-1-phosphate (HK-MTPenyl-1-P), which is then dephosphorylated to form the acireductone 1,2-dihydroxy-3-keto-5-methylthiopentene (DHK-MTPene). The sequence is that of Enolase-phosphatase E1 from Synechococcus sp. (strain CC9605).